Here is a 393-residue protein sequence, read N- to C-terminus: Phosphoglycerate kinase (393 aa).

Substrate is bound by residues 21 to 23 (DFN), 59 to 62 (HLGR), Arg118, and Arg151. Residues Lys201, Glu323, and 349 to 352 (GGDT) each bind ATP.

This sequence belongs to the phosphoglycerate kinase family. As to quaternary structure, monomer.

It localises to the cytoplasm. It carries out the reaction (2R)-3-phosphoglycerate + ATP = (2R)-3-phospho-glyceroyl phosphate + ADP. Its pathway is carbohydrate degradation; glycolysis; pyruvate from D-glyceraldehyde 3-phosphate: step 2/5. This Pelotomaculum thermopropionicum (strain DSM 13744 / JCM 10971 / SI) protein is Phosphoglycerate kinase.